We begin with the raw amino-acid sequence, 145 residues long: D-aminoacyl-tRNA deacylase (145 aa).

The Gly-cisPro motif, important for rejection of L-amino acids signature appears at glycine 137–proline 138.

It belongs to the DTD family. Homodimer.

Its subcellular location is the cytoplasm. The enzyme catalyses glycyl-tRNA(Ala) + H2O = tRNA(Ala) + glycine + H(+). It carries out the reaction a D-aminoacyl-tRNA + H2O = a tRNA + a D-alpha-amino acid + H(+). An aminoacyl-tRNA editing enzyme that deacylates mischarged D-aminoacyl-tRNAs. Also deacylates mischarged glycyl-tRNA(Ala), protecting cells against glycine mischarging by AlaRS. Acts via tRNA-based rather than protein-based catalysis; rejects L-amino acids rather than detecting D-amino acids in the active site. By recycling D-aminoacyl-tRNA to D-amino acids and free tRNA molecules, this enzyme counteracts the toxicity associated with the formation of D-aminoacyl-tRNA entities in vivo and helps enforce protein L-homochirality. The sequence is that of D-aminoacyl-tRNA deacylase from Rhodococcus opacus (strain B4).